The chain runs to 200 residues: Protein OPI10 homolog (200 aa).

Belongs to the OPI10 family.

The protein localises to the cytoplasm. The protein resides in the nucleus envelope. The protein is Protein OPI10 homolog of Schizosaccharomyces pombe (strain 972 / ATCC 24843) (Fission yeast).